Consider the following 191-residue polypeptide: Putative manganese efflux pump MntP (191 aa).

Transmembrane regions (helical) follow at residues proline 3 to glycine 23, leucine 37 to leucine 57, valine 65 to isoleucine 85, tryptophan 107 to phenylalanine 129, cysteine 144 to glycine 164, and isoleucine 169 to glycine 189.

It belongs to the MntP (TC 9.B.29) family.

Its subcellular location is the cell inner membrane. Probably functions as a manganese efflux pump. The protein is Putative manganese efflux pump MntP of Stenotrophomonas maltophilia (strain R551-3).